Consider the following 179-residue polypeptide: Endoribonuclease YbeY (179 aa).

Zn(2+)-binding residues include His-148, His-152, and His-158.

The protein belongs to the endoribonuclease YbeY family. Zn(2+) serves as cofactor.

The protein localises to the cytoplasm. Functionally, single strand-specific metallo-endoribonuclease involved in late-stage 70S ribosome quality control and in maturation of the 3' terminus of the 16S rRNA. The protein is Endoribonuclease YbeY of Prochlorococcus marinus (strain MIT 9215).